The chain runs to 574 residues: Proline--tRNA ligase (574 aa).

This sequence belongs to the class-II aminoacyl-tRNA synthetase family. ProS type 1 subfamily. Homodimer.

It localises to the cytoplasm. The catalysed reaction is tRNA(Pro) + L-proline + ATP = L-prolyl-tRNA(Pro) + AMP + diphosphate. Catalyzes the attachment of proline to tRNA(Pro) in a two-step reaction: proline is first activated by ATP to form Pro-AMP and then transferred to the acceptor end of tRNA(Pro). As ProRS can inadvertently accommodate and process non-cognate amino acids such as alanine and cysteine, to avoid such errors it has two additional distinct editing activities against alanine. One activity is designated as 'pretransfer' editing and involves the tRNA(Pro)-independent hydrolysis of activated Ala-AMP. The other activity is designated 'posttransfer' editing and involves deacylation of mischarged Ala-tRNA(Pro). The misacylated Cys-tRNA(Pro) is not edited by ProRS. The protein is Proline--tRNA ligase of Thioalkalivibrio sulfidiphilus (strain HL-EbGR7).